Consider the following 434-residue polypeptide: Eukaryotic translation initiation factor 3 subunit E-2 (434 aa).

The 174-residue stretch at 219 to 392 (FFNHPKGRDL…GHVVMGTQPL (174 aa)) folds into the PCI domain.

The protein belongs to the eIF-3 subunit E family. Component of the eukaryotic translation initiation factor 3 (eIF-3) complex. The eIF-3 complex interacts with pix. Interacts with mxt.

It localises to the cytoplasm. Component of the eukaryotic translation initiation factor 3 (eIF-3) complex, which is involved in protein synthesis of a specialized repertoire of mRNAs and, together with other initiation factors, stimulates binding of mRNA and methionyl-tRNAi to the 40S ribosome. The eIF-3 complex specifically targets and initiates translation of a subset of mRNAs involved in cell proliferation. This is Eukaryotic translation initiation factor 3 subunit E-2 (eIF3-S6-2) from Drosophila willistoni (Fruit fly).